Consider the following 1113-residue polypeptide: Translation initiation factor IF-2 (1113 aa).

4 stretches are compositionally biased toward polar residues: residues 56-72 (QSNQSINNKTKQNSSKE), 129-139 (KANTSNQSKGV), 162-187 (LENNASKQNIEDNNNFQERSPRTQLV), and 194-205 (TKNNEPPQQKTS). 2 disordered regions span residues 56–446 (QSNQ…IGEN) and 470–504 (LARPAKPKSTKKSNSKATVVTRKRKKESTRQRQRR). A compositionally biased stretch (low complexity) spans 248 to 265 (PVQPRTQNNQNRQRIPNK). The segment covering 415–429 (RRSDWDDAAKLEALR) has biased composition (basic and acidic residues). Basic residues-rich tracts occupy residues 474–483 (AKPKSTKKSN) and 490–504 (TRKRKKESTRQRQRR). Residues 605–777 (RRPPVVTVMG…VLLVTEVEDL (173 aa)) enclose the tr-type G domain. Residues 614-621 (GHVDHGKT) form a G1 region. 614 to 621 (GHVDHGKT) is a GTP binding site. Residues 639–643 (GITQH) form a G2 region. The interval 664-667 (DTPG) is G3. Residues 664–668 (DTPGH) and 718–721 (NKID) contribute to the GTP site. The interval 718 to 721 (NKID) is G4. The segment at 754 to 756 (SAI) is G5.

The protein belongs to the TRAFAC class translation factor GTPase superfamily. Classic translation factor GTPase family. IF-2 subfamily.

The protein localises to the cytoplasm. In terms of biological role, one of the essential components for the initiation of protein synthesis. Protects formylmethionyl-tRNA from spontaneous hydrolysis and promotes its binding to the 30S ribosomal subunits. Also involved in the hydrolysis of GTP during the formation of the 70S ribosomal complex. In Prochlorococcus marinus (strain MIT 9211), this protein is Translation initiation factor IF-2.